The following is a 207-amino-acid chain: Large ribosomal subunit protein bL9 (207 aa).

Positions 162-176 (QKKEEKAKDEVSATE) are enriched in basic and acidic residues. The disordered stretch occupies residues 162 to 207 (QKKEEKAKDEVSATEKDEELMLSSVTNDNDGDGAKEIVVEGTEESQ).

It belongs to the bacterial ribosomal protein bL9 family.

Functionally, binds to the 23S rRNA. The protein is Large ribosomal subunit protein bL9 of Ehrlichia ruminantium (strain Gardel).